The sequence spans 396 residues: Exodeoxyribonuclease 7 large subunit (396 aa).

This sequence belongs to the XseA family. In terms of assembly, heterooligomer composed of large and small subunits.

It is found in the cytoplasm. It catalyses the reaction Exonucleolytic cleavage in either 5'- to 3'- or 3'- to 5'-direction to yield nucleoside 5'-phosphates.. Its function is as follows. Bidirectionally degrades single-stranded DNA into large acid-insoluble oligonucleotides, which are then degraded further into small acid-soluble oligonucleotides. The chain is Exodeoxyribonuclease 7 large subunit from Clostridium tetani (strain Massachusetts / E88).